The chain runs to 1522 residues: MDEKYTAKNRDKTFVVIEKRFKKNIIHRFSAKRSLFLFTPRNPIRRLAVCIATNVCFDYFLMFTIMINCVFLAMPDISEFAEYIFLGIYTMEMAIKLVAGGFFIDKYTYLRDAWNCLDFTVIMISYITLLLQTINDKVISDITGLRTFRVLRALRTLSIIPGLKTMVNALLRALRMLISVLILILFCLWIFSQAGVQLFGGALRHKCVLQIHGSPAFGKTYDEFYAEHIENSDNWLAKGNGEYVLCGNATGAGPCPTNYTCLPDIGENPNYGYTNFDSIGWSMLISFQLLTQDYWEDVYNKVIRAHSPWTVIYFIVINFFGSLYLMNLMLAVVATAYELEVKNTGKKLQQTAATAREQSLKEQERRNTLTVSEADSHVDDRNCTCCEQCCGCCYNPWLRVQSFAHCIITDSFTEVFIIFIIVLNTVFLAMEHHGMSMELKNVLKVANYVFTTVFVLEAILKLLAFNKQYFKSGWNICDLVVVVASLIDLGVEGLKGVSVFRSFRLLRVFHLAQSWTTMRLLLCIILNTLGSLGYLTIILIIVIYIFAVTGLQLFHTEYTPDKFRGEPVPRWNFNDFLHSFMMVFRILCGEWIEPMYDCMRACNGLCFLIFIPVTVFGKTLFFLFIGLVLGAFGSDTVEQEVEVSSFALPGPESKPCSVRERGISATDDNVKDDGQDEVQQNSEETKIDLRNNDKQSKDGMILENNCNNDSLASLGSLGSIPDIMDGSSVEDDISSCQQKDIQPCLPLFISSRFKCLREFDDTSHGKKWNNFRRQLMMVCENKYFETGVLVIIFASSILLAFEDIYLNEKPRLKLAIFYLDITFCLLFFLEMVLKLVALGFVHYYTHFWTILDFTIVIITVISLAASGLGMEQITAFRSLRTLRALRPLRAVSRWQGMKIIVNALMLSIPSIFNVLLVCVVFWLIFAIMGVQLFAGKFYKCVNETNMRIPPTEVANKIECYNKNYTWVNSNVNFDNVGGAFLALFQVATFEGWMEIMADAVDVTEVDEQPKFEATVYYYFYFVLFIIFGSFFVLNLVIGVIIDKFSFLKKKYDGTYLDMFLTPTQQNYYNTLKKLGTKKPQKTVKRPKNKCQAVVYDLVMSNQFEIFITTIIITNMIFMAFEHYNQSEVVTEVLATANIAFTILYAVEAIIKIIGLRIHYLRNLWNVFDFLVVTLSVMDAFLNDIFGDGIFMNPSLLRVARMFRIGRIIRLIKWAKGMRKLLFALVISLPALFNIGALLMLVMFIYTIIGMSSFGQIKLSGALNDQVNFQTFGKTFLLLVRLATSAGWNDILGPLLIQPPNCDPNYITTSTGEKIKVVNGDCGMPWLAISYMVSYIIIVFMIVFNMYIAVILENFNQAHAQEEVGITEDDLDMFYGVWEQYDPLATQFIKHEQLSDFIQDLDPPLKVKKPNNVAIATFDLPIVKGGHIHCLDILLALVKFALGGNLEETEAFKRVRTQMEARFDEIFPTREKSEIRTSTLQMRREEMAARTLQRAWKRRKIMRSFPSPEMIRYFIISAPETAV.

The Cytoplasmic portion of the chain corresponds to 1–50 (MDEKYTAKNRDKTFVVIEKRFKKNIIHRFSAKRSLFLFTPRNPIRRLAVC). The I repeat unit spans residues 41–342 (RNPIRRLAVC…VATAYELEVK (302 aa)). Residues 51–70 (IATNVCFDYFLMFTIMINCV) form a helical membrane-spanning segment. The Extracellular segment spans residues 71-77 (FLAMPDI). Residues 78–99 (SEFAEYIFLGIYTMEMAIKLVA) traverse the membrane as a helical segment. Over 100–112 (GGFFIDKYTYLRD) the chain is Cytoplasmic. Residues 113-134 (AWNCLDFTVIMISYITLLLQTI) form a helical membrane-spanning segment. Over 135-143 (NDKVISDIT) the chain is Extracellular. Residues 144-167 (GLRTFRVLRALRTLSIIPGLKTMV) traverse the membrane as a helical; Voltage-sensor segment. Residues 168 to 179 (NALLRALRMLIS) lie on the Cytoplasmic side of the membrane. Residues 180–201 (VLILILFCLWIFSQAGVQLFGG) traverse the membrane as a helical segment. The Extracellular portion of the chain corresponds to 202-278 (ALRHKCVLQI…PNYGYTNFDS (77 aa)). An intrachain disulfide couples Cys-207 to Cys-255. N-linked (GlcNAc...) asparagine glycosylation is found at Asn-248 and Asn-258. The pore-forming intramembrane region spans 279–303 (IGWSMLISFQLLTQDYWEDVYNKVI). The Extracellular segment spans residues 304–308 (RAHSP). The chain crosses the membrane as a helical span at residues 309–331 (WTVIYFIVINFFGSLYLMNLMLA). The Cytoplasmic segment spans residues 332-406 (VVATAYELEV…WLRVQSFAHC (75 aa)). The II repeat unit spans residues 393–647 (CYNPWLRVQS…EQEVEVSSFA (255 aa)). The chain crosses the membrane as a helical span at residues 407-426 (IITDSFTEVFIIFIIVLNTV). Residues 427–442 (FLAMEHHGMSMELKNV) lie on the Extracellular side of the membrane. The helical transmembrane segment at 443-464 (LKVANYVFTTVFVLEAILKLLA) threads the bilayer. Over 465 to 472 (FNKQYFKS) the chain is Cytoplasmic. The helical transmembrane segment at 473 to 491 (GWNICDLVVVVASLIDLGV) threads the bilayer. At 492–498 (EGLKGVS) the chain is on the extracellular side. The helical; Voltage-sensor transmembrane segment at 499–522 (VFRSFRLLRVFHLAQSWTTMRLLL) threads the bilayer. Residues 523-531 (CIILNTLGS) lie on the Cytoplasmic side of the membrane. Residues 532–553 (LGYLTIILIIVIYIFAVTGLQL) form a helical membrane-spanning segment. At 554–575 (FHTEYTPDKFRGEPVPRWNFND) the chain is on the extracellular side. Positions 576-596 (FLHSFMMVFRILCGEWIEPMY) form an intramembrane region, pore-forming. Residues 597–607 (DCMRACNGLCF) are Extracellular-facing. Cys-598 and Cys-606 are disulfide-bonded. A helical transmembrane segment spans residues 608–628 (LIFIPVTVFGKTLFFLFIGLV). The Cytoplasmic segment spans residues 629-777 (LGAFGSDTVE…WNNFRRQLMM (149 aa)). The III repeat unit spans residues 770-1074 (NFRRQLMMVC…QNYYNTLKKL (305 aa)). A helical membrane pass occupies residues 778 to 797 (VCENKYFETGVLVIIFASSI). Residues 798–815 (LLAFEDIYLNEKPRLKLA) lie on the Extracellular side of the membrane. The helical transmembrane segment at 816–837 (IFYLDITFCLLFFLEMVLKLVA) threads the bilayer. Over 838 to 846 (LGFVHYYTH) the chain is Cytoplasmic. A helical transmembrane segment spans residues 847 to 868 (FWTILDFTIVIITVISLAASGL). Residues 869 to 874 (GMEQIT) are Extracellular-facing. Residues 875–898 (AFRSLRTLRALRPLRAVSRWQGMK) traverse the membrane as a helical; Voltage-sensor segment. Over 899-915 (IIVNALMLSIPSIFNVL) the chain is Cytoplasmic. A helical membrane pass occupies residues 916–937 (LVCVVFWLIFAIMGVQLFAGKF). The Extracellular segment spans residues 938–976 (YKCVNETNMRIPPTEVANKIECYNKNYTWVNSNVNFDNV). 2 N-linked (GlcNAc...) asparagine glycosylation sites follow: Asn-942 and Asn-963. Residues 977–998 (GGAFLALFQVATFEGWMEIMAD) constitute an intramembrane region (pore-forming). Topologically, residues 999-1009 (AVDVTEVDEQP) are extracellular. Residues 1010 to 1022 (KFEATVYYYFYFV) traverse the membrane as a helical segment. Over 1023–1100 (LFIIFGSFFV…QAVVYDLVMS (78 aa)) the chain is Cytoplasmic. Residue Thr-1076 is modified to Phosphothreonine; by PKC. An IV repeat occupies 1083-1386 (VKRPKNKCQA…WEQYDPLATQ (304 aa)). The chain crosses the membrane as a helical span at residues 1101–1120 (NQFEIFITTIIITNMIFMAF). The Extracellular segment spans residues 1121 to 1132 (EHYNQSEVVTEV). Asn-1124 carries an N-linked (GlcNAc...) asparagine glycan. The helical transmembrane segment at 1133-1154 (LATANIAFTILYAVEAIIKIIG) threads the bilayer. Over 1155–1162 (LRIHYLRN) the chain is Cytoplasmic. Residues 1163–1184 (LWNVFDFLVVTLSVMDAFLNDI) form a helical membrane-spanning segment. At 1185–1194 (FGDGIFMNPS) the chain is on the extracellular side. Residues 1195–1218 (LLRVARMFRIGRIIRLIKWAKGMR) form a helical; Voltage-sensor membrane-spanning segment. The Cytoplasmic portion of the chain corresponds to 1219–1236 (KLLFALVISLPALFNIGA). A helical transmembrane segment spans residues 1237 to 1258 (LLMLVMFIYTIIGMSSFGQIKL). Over 1259–1270 (SGALNDQVNFQT) the chain is Extracellular. The pore-forming intramembrane region spans 1271-1293 (FGKTFLLLVRLATSAGWNDILGP). Topologically, residues 1294-1323 (LLIQPPNCDPNYITTSTGEKIKVVNGDCGM) are extracellular. Residues 1324–1346 (PWLAISYMVSYIIIVFMIVFNMY) form a helical membrane-spanning segment. Over 1347–1522 (IAVILENFNQ…FIISAPETAV (176 aa)) the chain is Cytoplasmic.

Belongs to the sodium channel (TC 1.A.1.10) family.

It localises to the cell membrane. Its function is as follows. Mediates the voltage-dependent sodium ion permeability of excitable membranes. Assuming opened or closed conformations in response to the voltage difference across the membrane, the protein forms a sodium-selective channel through which Na(+) ions may pass in accordance with their electrochemical gradient. This chain is Sodium channel protein 1 brain, found in Heterololigo bleekeri (Spear squid).